We begin with the raw amino-acid sequence, 458 residues long: Pyruvate kinase (458 aa).

Position 33 (Arg-33) interacts with substrate. The K(+) site is built by Asn-35, Ser-37, and Asp-67. 35-38 (NASH) serves as a coordination point for ATP. ATP is bound by residues Arg-74 and Lys-148. Glu-214 is a Mg(2+) binding site. Substrate is bound by residues Gly-237, Asp-238, and Thr-270. Asp-238 lines the Mg(2+) pocket.

It belongs to the pyruvate kinase family. Homotetramer. Requires a divalent metal cation as cofactor.

The enzyme catalyses pyruvate + ATP = phosphoenolpyruvate + ADP + H(+). The protein operates within carbohydrate degradation; glycolysis; pyruvate from D-glyceraldehyde 3-phosphate: step 5/5. Its activity is regulated as follows. Not activated by classical allosteric effectors. The polypeptide is Pyruvate kinase (pyk) (Aeropyrum pernix (strain ATCC 700893 / DSM 11879 / JCM 9820 / NBRC 100138 / K1)).